Reading from the N-terminus, the 422-residue chain is Isocitrate dehydrogenase [NADP] (422 aa).

Thr94 provides a ligand contact to NADP(+). D-threo-isocitrate contacts are provided by Ser103, Asn105, Arg109, Arg119, and Arg143. Asp310 contacts Mg(2+). NADP(+) contacts are provided by residues 344–350, Asn357, Tyr396, and Arg400; that span reads HGTAPKY.

It belongs to the isocitrate and isopropylmalate dehydrogenases family. As to quaternary structure, homodimer. Requires Mg(2+) as cofactor. The cofactor is Mn(2+).

It catalyses the reaction D-threo-isocitrate + NADP(+) = 2-oxoglutarate + CO2 + NADPH. In terms of biological role, catalyzes the oxidative decarboxylation of isocitrate to 2-oxoglutarate and carbon dioxide with the concomitant reduction of NADP(+). This is Isocitrate dehydrogenase [NADP] (icd) from Staphylococcus aureus (strain COL).